Reading from the N-terminus, the 168-residue chain is Lipoprotein signal peptidase (168 aa).

Transmembrane regions (helical) follow at residues L8 to V28, G61 to I81, and F91 to F111. Residues D117 and D135 contribute to the active site. A helical transmembrane segment spans residues F128–Y148.

This sequence belongs to the peptidase A8 family.

Its subcellular location is the cell membrane. The catalysed reaction is Release of signal peptides from bacterial membrane prolipoproteins. Hydrolyzes -Xaa-Yaa-Zaa-|-(S,diacylglyceryl)Cys-, in which Xaa is hydrophobic (preferably Leu), and Yaa (Ala or Ser) and Zaa (Gly or Ala) have small, neutral side chains.. Its pathway is protein modification; lipoprotein biosynthesis (signal peptide cleavage). Its function is as follows. This protein specifically catalyzes the removal of signal peptides from prolipoproteins. The polypeptide is Lipoprotein signal peptidase (Anoxybacillus flavithermus (strain DSM 21510 / WK1)).